The primary structure comprises 409 residues: MQHYTFCLCDGMYCPSKEYILKYCENNGNNYYINDSDNLIPINFSVYDYDNCGNYFTFNCILVDFENILKFNGFIARKKLSDILNVHMDKCKRSAFVIDYLDHITKNNTIKHIKYYLGNNYYNITCWNYYLQSKIFRYSDLSSIRSCLKYLPVDRISGYLVDCLIRNDNVILDYLVDKIIIYLRLSFTHKKYKGNMFKITDNNDKLSDILNVNCVMESIIHECANNNTIESYHQTIDRFQELLESQENVKVKKDLITKHNKLKLGFTLNDKTLNYLLGYILMERNGNPLIIVKQLLMDGANIYTEIDRDFGFTFFDQTITIIISNENLELLDILFEMKLISQDKLNYILEKSIGELNLKKDVKTINSKEFIRELSGYGADVDKYVDKLIKKANKYNNNKLVDYLKDLKD.

It belongs to the mimivirus L17x/L18x family.

This is an uncharacterized protein from Acanthamoeba polyphaga mimivirus (APMV).